Reading from the N-terminus, the 409-residue chain is D-galactonate dehydratase family member Achl_0790 (409 aa).

D217 is a Mg(2+) binding site. H219 lines the D-arabinonate pocket. E243 and E269 together coordinate Mg(2+). D-arabinonate contacts are provided by E269, R290, H319, and E346.

It belongs to the mandelate racemase/muconate lactonizing enzyme family. GalD subfamily.

Functionally, has no detectable activity with D-mannonate and with a panel of 70 other acid sugars (in vitro), in spite of the conservation of the residues that are expected to be important for catalytic activity and cofactor binding. May have evolved a divergent function. This is D-galactonate dehydratase family member Achl_0790 from Pseudarthrobacter chlorophenolicus (strain ATCC 700700 / DSM 12829 / CIP 107037 / JCM 12360 / KCTC 9906 / NCIMB 13794 / A6) (Arthrobacter chlorophenolicus).